Consider the following 301-residue polypeptide: 4-diphosphocytidyl-2-C-methyl-D-erythritol kinase (301 aa).

The active site involves Lys18. 103-113 (PVAAGIGGGSA) is an ATP binding site. Asp145 is a catalytic residue.

It belongs to the GHMP kinase family. IspE subfamily.

It catalyses the reaction 4-CDP-2-C-methyl-D-erythritol + ATP = 4-CDP-2-C-methyl-D-erythritol 2-phosphate + ADP + H(+). It participates in isoprenoid biosynthesis; isopentenyl diphosphate biosynthesis via DXP pathway; isopentenyl diphosphate from 1-deoxy-D-xylulose 5-phosphate: step 3/6. Its function is as follows. Catalyzes the phosphorylation of the position 2 hydroxy group of 4-diphosphocytidyl-2C-methyl-D-erythritol. This Bradyrhizobium sp. (strain BTAi1 / ATCC BAA-1182) protein is 4-diphosphocytidyl-2-C-methyl-D-erythritol kinase.